The primary structure comprises 89 residues: Small ribosomal subunit protein uS15 (89 aa).

The protein belongs to the universal ribosomal protein uS15 family. In terms of assembly, part of the 30S ribosomal subunit. Forms a bridge to the 50S subunit in the 70S ribosome, contacting the 23S rRNA.

In terms of biological role, one of the primary rRNA binding proteins, it binds directly to 16S rRNA where it helps nucleate assembly of the platform of the 30S subunit by binding and bridging several RNA helices of the 16S rRNA. Functionally, forms an intersubunit bridge (bridge B4) with the 23S rRNA of the 50S subunit in the ribosome. The polypeptide is Small ribosomal subunit protein uS15 (Pectobacterium atrosepticum (strain SCRI 1043 / ATCC BAA-672) (Erwinia carotovora subsp. atroseptica)).